A 505-amino-acid polypeptide reads, in one-letter code: MDTIDQTPHRSYEVRTYGCQMNVHDSERLSGLLEDAGYTKAAAGQAPDLVVFNTCAVRENADNKLYGNLSHLAPAKERNPDMQIAVGGCLAQKDRDVVVKKAPWVDVVFGTHNIGSLPALLDRARHNQRAEVEILEALEAFPSTLPAKRESAYAGWVSISVGCNNTCTFCIVPALRGKEVDRRPGDILAEVQALVNEGVVEVTLLGQNVNAYGVSFADPDQPRDRGAFAALLRACGQIDGLERVRFTSPHPAEFTDDVIEAMAETPNVCPQLHMPLQSGSDRVLKAMRRSYRKSRFLGIIDKVRTAMPHAAITTDIIVGFPGETEEDFQDTLDVVRQARFTSAYTFQYSKRPGTPAAEMDEQLPKAVVQERYERLIALQEQITLEENQKLVGAEVELLVAAGEGRKNAETARMSGRARDGRLVHFRPEGNLDGTVRPGDVVTVVVSAAAPHHLVADTPVLTHRRTRAGDSFEKGVTPKTPPIGVGLGLPQIGAPAPLPVQMGCNA.

The 117-residue stretch at 10–126 folds into the MTTase N-terminal domain; it reads RSYEVRTYGC…LPALLDRARH (117 aa). 6 residues coordinate [4Fe-4S] cluster: C19, C55, C89, C163, C167, and C170. In terms of domain architecture, Radical SAM core spans 149 to 385; that stretch reads RESAYAGWVS…IALQEQITLE (237 aa). Positions 388 to 459 constitute a TRAM domain; the sequence is QKLVGAEVEL…PHHLVADTPV (72 aa).

The protein belongs to the methylthiotransferase family. MiaB subfamily. In terms of assembly, monomer. The cofactor is [4Fe-4S] cluster.

The protein resides in the cytoplasm. It catalyses the reaction N(6)-dimethylallyladenosine(37) in tRNA + (sulfur carrier)-SH + AH2 + 2 S-adenosyl-L-methionine = 2-methylsulfanyl-N(6)-dimethylallyladenosine(37) in tRNA + (sulfur carrier)-H + 5'-deoxyadenosine + L-methionine + A + S-adenosyl-L-homocysteine + 2 H(+). Catalyzes the methylthiolation of N6-(dimethylallyl)adenosine (i(6)A), leading to the formation of 2-methylthio-N6-(dimethylallyl)adenosine (ms(2)i(6)A) at position 37 in tRNAs that read codons beginning with uridine. In Rhodococcus jostii (strain RHA1), this protein is tRNA-2-methylthio-N(6)-dimethylallyladenosine synthase.